Reading from the N-terminus, the 191-residue chain is Polysulfide reductase chain B (191 aa).

4Fe-4S ferredoxin-type domains lie at 5 to 34 (YGMI…PDSV), 50 to 83 (GTLS…VNED), and 84 to 113 (GIVS…VDPV). Cysteine 14, cysteine 17, cysteine 20, cysteine 24, cysteine 61, cysteine 64, cysteine 69, cysteine 73, cysteine 93, cysteine 96, cysteine 99, cysteine 103, cysteine 120, cysteine 123, cysteine 136, and cysteine 140 together coordinate [4Fe-4S] cluster.

As to quaternary structure, functional polysulfide reductase is made up of three different (A, B, and C) subunits.

Its function is as follows. Component of the phosphorylative electron transport system with polysulfide as the terminal acceptor. This is Polysulfide reductase chain B (psrB) from Wolinella succinogenes (strain ATCC 29543 / DSM 1740 / CCUG 13145 / JCM 31913 / LMG 7466 / NCTC 11488 / FDC 602W) (Vibrio succinogenes).